Reading from the N-terminus, the 171-residue chain is Small ribosomal subunit protein mS25 (171 aa).

Belongs to the mitochondrion-specific ribosomal protein mS25 family. Component of the mitochondrial ribosome small subunit (28S) which comprises a 12S rRNA and about 30 distinct proteins.

It is found in the mitochondrion. The sequence is that of Small ribosomal subunit protein mS25 (Mrps25) from Rattus norvegicus (Rat).